Consider the following 248-residue polypeptide: Type II methyltransferase M.AquIA (248 aa).

In terms of domain architecture, SAM-dependent MTase C5-type spans 3-248; it reads KKLISLFSGA…IKDRIKNHGY (246 aa). The active site involves Cys-82.

The protein belongs to the class I-like SAM-binding methyltransferase superfamily. C5-methyltransferase family. Heterodimer of an alpha and a beta subunit.

The catalysed reaction is a 2'-deoxycytidine in DNA + S-adenosyl-L-methionine = a 5-methyl-2'-deoxycytidine in DNA + S-adenosyl-L-homocysteine + H(+). Functionally, a methylase, recognizes the double-stranded sequence 5'-CYCGRG-3', methylates C-1 on both strands, and protects the DNA from cleavage by the AquI endonuclease. This Picosynechococcus sp. (strain ATCC 27264 / PCC 7002 / PR-6) (Agmenellum quadruplicatum) protein is Type II methyltransferase M.AquIA (aquIMA).